Here is a 335-residue protein sequence, read N- to C-terminus: MKNLILAIESSCDDSSIAIIDKNTLECKFHKKISQELDHSIYGGVVPELAARLHSEALPKMLKQCKEHFKNLCAIAVTNEPGLSVSLLSGISMAKTLASALNLPLIPINHLKGHIYSLFLEEKISLDMGILLVSGGHTMVLYLKDDASLELLASTNDDSFGESFDKVAKMMNLGYPGGVIIENLAKNAKLKNISFNTPLKHSKELAFSFSGLKNAVRLEILKHENLNEDTKAEIAYAFENTACDHIMDKLEKIFNLYKFKNFGVVGGASANLNLRSRLQNLCQKYNANLKLAPLKFCSDNALMIARAAVDAYEKKEFVSVEEDILSPKNKNFSRI.

Fe cation-binding residues include H110 and H114. Residues 132 to 136 (LVSGG), D165, G178, and N271 each bind substrate. Residue D299 participates in Fe cation binding.

The protein belongs to the KAE1 / TsaD family. The cofactor is Fe(2+).

The protein localises to the cytoplasm. It carries out the reaction L-threonylcarbamoyladenylate + adenosine(37) in tRNA = N(6)-L-threonylcarbamoyladenosine(37) in tRNA + AMP + H(+). Its function is as follows. Required for the formation of a threonylcarbamoyl group on adenosine at position 37 (t(6)A37) in tRNAs that read codons beginning with adenine. Is involved in the transfer of the threonylcarbamoyl moiety of threonylcarbamoyl-AMP (TC-AMP) to the N6 group of A37, together with TsaE and TsaB. TsaD likely plays a direct catalytic role in this reaction. The polypeptide is tRNA N6-adenosine threonylcarbamoyltransferase (Campylobacter jejuni subsp. jejuni serotype O:2 (strain ATCC 700819 / NCTC 11168)).